A 197-amino-acid chain; its full sequence is SIGLEC family-like protein 1 (197 aa).

Residues 118 to 138 (GAIYAGIVIALLFLCLLPLIV) form a helical membrane-spanning segment. A disordered region spans residues 160–179 (VRASQELEMSLKPEEPGKPV). The segment covering 162–176 (ASQELEMSLKPEEPG) has biased composition (basic and acidic residues).

The protein resides in the membrane. This Homo sapiens (Human) protein is SIGLEC family-like protein 1 (SIGLECL1).